Reading from the N-terminus, the 354-residue chain is Guanine nucleotide-binding protein G(i) subunit alpha (354 aa).

Gly-2 carries the N-myristoyl glycine lipid modification. The S-palmitoyl cysteine moiety is linked to residue Cys-3. Positions 32-354 constitute a G-alpha domain; it reads REVKLLLLGA…KNNLKDCGLF (323 aa). The G1 motif stretch occupies residues 35–48; the sequence is KLLLLGAGESGKST. GTP-binding positions include 40 to 47, 175 to 181, 200 to 204, 269 to 272, and Ala-326; these read GAGESGKS, LRTRVKT, DVGGQ, and NKKD. Residues Ser-47 and Thr-181 each coordinate Mg(2+). The segment at 173–181 is G2 motif; that stretch reads DVLRTRVKT. Residues 196 to 205 form a G3 motif region; it reads FKMFDVGGQR. Residues 265–272 are G4 motif; sequence ILFLNKKD. Residues 324–329 form a G5 motif region; the sequence is TCATDT.

Belongs to the G-alpha family. G(i/o/t/z) subfamily. As to quaternary structure, g proteins are composed of 3 units; alpha, beta and gamma. The alpha chain contains the guanine nucleotide binding site.

In terms of biological role, guanine nucleotide-binding proteins (G proteins) are involved as modulators or transducers in various transmembrane signaling systems. This G protein is involved in 1-methyladenine-induced oocyte maturation. This is Guanine nucleotide-binding protein G(i) subunit alpha from Patiria pectinifera (Starfish).